We begin with the raw amino-acid sequence, 832 residues long: Translation initiation factor IF-2 (832 aa).

The tract at residues Met-1–Glu-244 is disordered. Polar residues predominate over residues Thr-18–His-27. A compositionally biased stretch (basic and acidic residues) spans Lys-81–Ala-141. Low complexity predominate over residues Ser-142–Ala-171. Basic and acidic residues-rich tracts occupy residues Pro-178–Arg-201 and Arg-227–Glu-244. Residues Pro-329–Glu-497 enclose the tr-type G domain. Residues Gly-338 to Thr-345 form a G1 region. Gly-338–Thr-345 contacts GTP. The G2 stretch occupies residues Gly-363–His-367. Residues Asp-385–Gly-388 are G3. GTP is bound by residues Asp-385–His-389 and Asn-439–Asp-442. The G4 stretch occupies residues Asn-439–Asp-442. The G5 stretch occupies residues Ser-475–Ile-477.

It belongs to the TRAFAC class translation factor GTPase superfamily. Classic translation factor GTPase family. IF-2 subfamily.

It is found in the cytoplasm. Functionally, one of the essential components for the initiation of protein synthesis. Protects formylmethionyl-tRNA from spontaneous hydrolysis and promotes its binding to the 30S ribosomal subunits. Also involved in the hydrolysis of GTP during the formation of the 70S ribosomal complex. In Dinoroseobacter shibae (strain DSM 16493 / NCIMB 14021 / DFL 12), this protein is Translation initiation factor IF-2.